The following is a 472-amino-acid chain: Adenosylhomocysteinase (472 aa).

Substrate-binding residues include threonine 64, aspartate 138, and glutamate 198. 199 to 201 (TTT) lines the NAD(+) pocket. 2 residues coordinate substrate: lysine 228 and aspartate 232. Residues asparagine 233, 262-267 (GFGDVG), glutamate 285, asparagine 320, 341-343 (IGH), and asparagine 386 contribute to the NAD(+) site.

The protein belongs to the adenosylhomocysteinase family. Requires NAD(+) as cofactor.

The protein localises to the cytoplasm. The catalysed reaction is S-adenosyl-L-homocysteine + H2O = L-homocysteine + adenosine. It participates in amino-acid biosynthesis; L-homocysteine biosynthesis; L-homocysteine from S-adenosyl-L-homocysteine: step 1/1. Its function is as follows. May play a key role in the regulation of the intracellular concentration of adenosylhomocysteine. In Prochlorococcus marinus (strain MIT 9301), this protein is Adenosylhomocysteinase.